A 193-amino-acid chain; its full sequence is Proteasome subunit beta 1 (193 aa).

The propeptide at methionine 1–alanine 4 is removed in mature form; by autocatalysis. Threonine 5 acts as the Nucleophile in catalysis.

This sequence belongs to the peptidase T1B family. In terms of assembly, the 20S proteasome core is composed of 14 alpha and 14 beta subunits that assemble into four stacked heptameric rings, resulting in a barrel-shaped structure. The two inner rings, each composed of seven catalytic beta subunits, are sandwiched by two outer rings, each composed of seven alpha subunits. The catalytic chamber with the active sites is on the inside of the barrel. Has a gated structure, the ends of the cylinder being occluded by the N-termini of the alpha-subunits. Is capped at one or both ends by the proteasome regulatory ATPase, PAN.

Its subcellular location is the cytoplasm. It catalyses the reaction Cleavage of peptide bonds with very broad specificity.. Its activity is regulated as follows. The formation of the proteasomal ATPase PAN-20S proteasome complex, via the docking of the C-termini of PAN into the intersubunit pockets in the alpha-rings, triggers opening of the gate for substrate entry. Interconversion between the open-gate and close-gate conformations leads to a dynamic regulation of the 20S proteasome proteolysis activity. In terms of biological role, component of the proteasome core, a large protease complex with broad specificity involved in protein degradation. The protein is Proteasome subunit beta 1 of Cenarchaeum symbiosum (strain A).